A 563-amino-acid polypeptide reads, in one-letter code: Probable CoA ligase CCL11 (563 aa).

Residues 195-203, 328-333, D426, 438-441, and K534 contribute to the ATP site; these read TSGTTSSPK, HGYGMT, and IKDR. Positions 263–328 are SBD1; the sequence is DGEIIFNLIR…TESLGFVISH (66 aa). The tract at residues 329–405 is SBD2; it reads GYGMTEMLGV…LKGSSIMLGY (77 aa).

The protein belongs to the ATP-dependent AMP-binding enzyme family.

The protein resides in the cytoplasm. It localises to the cytosol. This chain is Probable CoA ligase CCL11, found in Humulus lupulus (European hop).